The chain runs to 156 residues: Arginine repressor (156 aa).

It belongs to the ArgR family.

Its subcellular location is the cytoplasm. The protein operates within amino-acid biosynthesis; L-arginine biosynthesis [regulation]. Its function is as follows. Regulates arginine biosynthesis genes. In Proteus mirabilis (strain HI4320), this protein is Arginine repressor.